Reading from the N-terminus, the 108-residue chain is MPKKDRTDQAPSKDVPKPEEGEVICVVKKMLGAEHIIIACLDGKERTARIPGRMRKKTWIKEGDVVLAAPWDFQPTKADIVYRYMNDEIRKLIEEKVISRDVIDQLRG.

The S1-like domain maps to 11–85; that stretch reads PSKDVPKPEE…TKADIVYRYM (75 aa).

The protein belongs to the eIF-1A family.

Functionally, seems to be required for maximal rate of protein biosynthesis. Enhances ribosome dissociation into subunits and stabilizes the binding of the initiator Met-tRNA(I) to 40 S ribosomal subunits. In Metallosphaera sedula (strain ATCC 51363 / DSM 5348 / JCM 9185 / NBRC 15509 / TH2), this protein is Translation initiation factor 1A (eIF1A).